Here is a 389-residue protein sequence, read N- to C-terminus: E3 ubiquitin-protein ligase E3D (389 aa).

An N-acetylalanine modification is found at alanine 2. The short motif at 129 to 159 (PLPGDNWGALVDEWCCHPDPFANKPLHPREN) is the BRAT1-like motif element. Cysteine 144 provides a ligand contact to Zn(2+). Residues 235 to 257 (LPSERNFPIIPRSQFVQSVLAQC) are interaction with UBE2C. Residues 353–389 (LPSTTCLELLLILSKSNATLPPSLRCMNSFQVAFLKM) are HECT-like.

As to quaternary structure, interacts with UBE2C/UbcH10 (E2 ubiquitin-conjugating enzyme). In vitro, interacts with cyclin-B. In terms of processing, ubiquitinated by UBCH10 (E2 ubiquitin-conjugating enzyme).

The protein resides in the cytoplasm. It catalyses the reaction S-ubiquitinyl-[E2 ubiquitin-conjugating enzyme]-L-cysteine + [acceptor protein]-L-lysine = [E2 ubiquitin-conjugating enzyme]-L-cysteine + N(6)-ubiquitinyl-[acceptor protein]-L-lysine.. Its pathway is protein modification; protein ubiquitination. In terms of biological role, E3 ubiquitin-protein ligase which accepts ubiquitin from specific E2 ubiquitin-conjugating enzymes, and transfers it to substrates, generally promoting their degradation by the proteasome. Independently of its E3 ubiquitin-protein ligase activity, acts as an inhibitor of CPSF3 endonuclease activity by blocking CPSF3 active site. This is E3 ubiquitin-protein ligase E3D (UBE3D) from Bos taurus (Bovine).